Here is a 406-residue protein sequence, read N- to C-terminus: Succinylornithine transaminase/acetylornithine aminotransferase (406 aa).

Pyridoxal 5'-phosphate is bound by residues 108-109 and Phe141; that span reads GA. Arg144 is a N(2)-acetyl-L-ornithine binding site. 226-229 provides a ligand contact to pyridoxal 5'-phosphate; it reads DEVQ. An N6-(pyridoxal phosphate)lysine modification is found at Lys255. Thr283 is a binding site for N(2)-acetyl-L-ornithine. A pyridoxal 5'-phosphate-binding site is contributed by Thr284.

It belongs to the class-III pyridoxal-phosphate-dependent aminotransferase family. ArgD subfamily. As to quaternary structure, homodimer. Pyridoxal 5'-phosphate is required as a cofactor.

Its subcellular location is the cytoplasm. It carries out the reaction N(2)-succinyl-L-ornithine + 2-oxoglutarate = N-succinyl-L-glutamate 5-semialdehyde + L-glutamate. The catalysed reaction is N(2)-acetyl-L-ornithine + 2-oxoglutarate = N-acetyl-L-glutamate 5-semialdehyde + L-glutamate. It functions in the pathway amino-acid biosynthesis; L-arginine biosynthesis; N(2)-acetyl-L-ornithine from L-glutamate: step 4/4. The protein operates within amino-acid degradation; L-arginine degradation via AST pathway; L-glutamate and succinate from L-arginine: step 3/5. Its function is as follows. Transaminates both N(2)-acetylornithine and N(2)-succinylornithine. The polypeptide is Succinylornithine transaminase/acetylornithine aminotransferase (aruC) (Pseudomonas aeruginosa (strain ATCC 15692 / DSM 22644 / CIP 104116 / JCM 14847 / LMG 12228 / 1C / PRS 101 / PAO1)).